Reading from the N-terminus, the 219-residue chain is tRNA (guanine-N(7)-)-methyltransferase (219 aa).

S-adenosyl-L-methionine-binding residues include Glu43, Asp68, Glu101, and Asn124. Positions 128 and 160 each coordinate substrate.

It belongs to the class I-like SAM-binding methyltransferase superfamily. TrmB family.

It carries out the reaction guanosine(46) in tRNA + S-adenosyl-L-methionine = N(7)-methylguanosine(46) in tRNA + S-adenosyl-L-homocysteine. The protein operates within tRNA modification; N(7)-methylguanine-tRNA biosynthesis. Functionally, catalyzes the formation of N(7)-methylguanine at position 46 (m7G46) in tRNA. The chain is tRNA (guanine-N(7)-)-methyltransferase from Clostridium botulinum (strain Eklund 17B / Type B).